The following is a 71-amino-acid chain: UPF0346 protein BCQ_2236 (71 aa).

It belongs to the UPF0346 family.

The chain is UPF0346 protein BCQ_2236 from Bacillus cereus (strain Q1).